The primary structure comprises 234 residues: uncharacterized protein (234 aa).

The next 4 membrane-spanning stretches (helical) occupy residues 28–48, 67–87, 123–143, and 154–174; these read IVII…SIIS, FQIF…FDPI, GGVD…SGTI, and LYCI…GLLY.

Belongs to the complex I subunit 2 family.

The protein localises to the mitochondrion membrane. This is an uncharacterized protein from Neurospora crassa (strain ATCC 24698 / 74-OR23-1A / CBS 708.71 / DSM 1257 / FGSC 987).